Reading from the N-terminus, the 165-residue chain is Large ribosomal subunit protein uL15 (165 aa).

The span at 1 to 30 shows a compositional bias: basic residues; the sequence is MTNKKRRQRGSRTHGGGTHKNRRGAGHRGG. 2 disordered regions span residues 1-39 and 137-165; these read MTNKKRRQRGSRTHGGGTHKNRRGAGHRGGRGAAGRAKH and AGGEATLSERAEEAADESENTSDDEDDEA. Residues 150-165 show a composition bias toward acidic residues; that stretch reads AADESENTSDDEDDEA.

This sequence belongs to the universal ribosomal protein uL15 family. As to quaternary structure, part of the 50S ribosomal subunit.

In terms of biological role, binds to the 23S rRNA. The sequence is that of Large ribosomal subunit protein uL15 from Halorubrum lacusprofundi (strain ATCC 49239 / DSM 5036 / JCM 8891 / ACAM 34).